We begin with the raw amino-acid sequence, 251 residues long: Homeobox protein notochord (251 aa).

Over residues 1 to 14 the composition is skewed to pro residues; that stretch reads MPSPRPRGSPPPAP. The interval 1-47 is disordered; the sequence is MPSPRPRGSPPPAPSGSRVRPPRSGRSPAPRSPTGPNTPRAPGRFES. Low complexity predominate over residues 15–35; it reads SGSRVRPPRSGRSPAPRSPTG. The segment at residues 156–215 is a DNA-binding region (homeobox); that stretch reads QKRVRTMFNLEQLEELEKVFAKQHNLVGKKRAQLAARLKLTENQVRVWFQNRRVKYQKQQ. The segment covering 224–242 has biased composition (low complexity); it reads AEAASLDEPSSSSIASIQS. The segment at 224–251 is disordered; the sequence is AEAASLDEPSSSSIASIQSDDAESGVDG.

It localises to the nucleus. Its function is as follows. Transcription regulator acting downstream of both FOXA2 and Brachyury (T) during notochord development. Required for node morphogenesis. Is essential for cilia formation in the posterior notochord (PNC) and for left-right patterning; acts upstream of FOXJ1 and RFX3 in this process and is required for the expression of various components important for axonemal assembly and function. Plays a role in regulating axial versus paraxial cell fate. Activates the transcription of ciliary proteins C11orf97 homolog, FAM183B and SPACA9 in the embryonic ventral node. This Homo sapiens (Human) protein is Homeobox protein notochord (NOTO).